Here is a 585-residue protein sequence, read N- to C-terminus: Frizzled-10 (585 aa).

Residues 1–24 form the signal peptide; sequence MGPAAGNLVRAVLALCWLAEHCAG. Residues 25–229 lie on the Extracellular side of the membrane; that stretch reads ISSIDIERPG…DVYWSKDDKQ (205 aa). Positions 33–154 constitute an FZ domain; sequence PGDGRCQPIE…NDPNYLCMEA (122 aa). Disulfide bonds link cysteine 38/cysteine 99, cysteine 46/cysteine 92, cysteine 83/cysteine 121, cysteine 110/cysteine 151, and cysteine 114/cysteine 138. Asparagine 52 is a glycosylation site (N-linked (GlcNAc...) asparagine). The interval 155-195 is disordered; that stretch reads PNNGSDEPPRGSSMLPPMFRPQRPSTGHDLQQHKDSLSRTS. An N-linked (GlcNAc...) asparagine glycan is attached at asparagine 157. A helical membrane pass occupies residues 230-250; that stretch reads FAVIWIAIWSILCFFSSAFTV. At 251–265 the chain is on the cytoplasmic side; that stretch reads LTFLIDPQRFKYPER. A helical membrane pass occupies residues 266 to 286; sequence PIIFLSMCYCVYSVGYIIRLF. The Extracellular segment spans residues 287 to 314; that stretch reads SGAESIACDRDSGQLYVIQEGLESTGCT. Residues 315–335 traverse the membrane as a helical segment; the sequence is IVFLVLYYFGMASSLWWVILT. The Cytoplasmic segment spans residues 336 to 355; the sequence is LTWFLAAGKKWGHEAIEANS. The helical transmembrane segment at 356–376 threads the bilayer; it reads SYFHLAAWAIPAVKTIMILVM. At 377–397 the chain is on the extracellular side; the sequence is RRVAGDELTGLCYVGSMDVNA. Residues 398 to 418 traverse the membrane as a helical segment; sequence LTGFVLIPLACYLIIGTSFIL. The Cytoplasmic segment spans residues 419-447; the sequence is SGFVALFHIRRVMKTGGENTDKLEKLMVR. The chain crosses the membrane as a helical span at residues 448 to 468; it reads IGVFSVLYTVPATCVIACYFY. At 469–506 the chain is on the extracellular side; the sequence is ERLNMDYWKIVASQQKCKMNNQTKNLDCMMNNSIPAVE. N-linked (GlcNAc...) asparagine glycans are attached at residues asparagine 489 and asparagine 499. A helical membrane pass occupies residues 507 to 527; that stretch reads IFMVKIFMLLVVGITSGMWIW. Topologically, residues 528-585 are cytoplasmic; sequence TSKTLQSWQNVCSRRLKKRSRRKPASVITSSGIYKKPQHPQKTHLAKYESTLQPPTCV. The Lys-Thr-X-X-X-Trp motif, mediates interaction with the PDZ domain of Dvl family members motif lies at 530–535; it reads KTLQSW. The PDZ-binding motif lies at 583 to 585; sequence TCV.

The protein belongs to the G-protein coupled receptor Fz/Smo family. In terms of assembly, interacts with WNT7A. Expressed in the dorsal ectoderm overlying the developing spinal cord.

The protein localises to the cell membrane. Receptor for Wnt proteins. Functions in the canonical Wnt/beta-catenin signaling pathway. Activation by WNT7A induces expression of beta-catenin target genes. The canonical Wnt/beta-catenin signaling pathway leads to the activation of disheveled proteins, inhibition of GSK-3 kinase, nuclear accumulation of beta-catenin and activation of Wnt target genes. A second signaling pathway involving PKC and calcium fluxes has been seen for some family members, but it is not yet clear if it represents a distinct pathway or if it can be integrated in the canonical pathway, as PKC seems to be required for Wnt-mediated inactivation of GSK-3 kinase. Both pathways seem to involve interactions with G-proteins. May be involved in transduction and intercellular transmission of polarity information during tissue morphogenesis and/or in differentiated tissues. The sequence is that of Frizzled-10 (FZD10) from Gallus gallus (Chicken).